A 425-amino-acid polypeptide reads, in one-letter code: 3-phosphoshikimate 1-carboxyvinyltransferase (425 aa).

Residues K22, S23, and R27 each contribute to the 3-phosphoshikimate site. Position 22 (K22) interacts with phosphoenolpyruvate. Phosphoenolpyruvate is bound by residues G95 and R123. 7 residues coordinate 3-phosphoshikimate: S169, S170, Q171, S197, D313, N336, and K340. Phosphoenolpyruvate is bound at residue Q171. Residue D313 is the Proton acceptor of the active site. Residues R344, R386, and K411 each coordinate phosphoenolpyruvate.

The protein belongs to the EPSP synthase family. As to quaternary structure, monomer.

The protein localises to the cytoplasm. It catalyses the reaction 3-phosphoshikimate + phosphoenolpyruvate = 5-O-(1-carboxyvinyl)-3-phosphoshikimate + phosphate. Its pathway is metabolic intermediate biosynthesis; chorismate biosynthesis; chorismate from D-erythrose 4-phosphate and phosphoenolpyruvate: step 6/7. Catalyzes the transfer of the enolpyruvyl moiety of phosphoenolpyruvate (PEP) to the 5-hydroxyl of shikimate-3-phosphate (S3P) to produce enolpyruvyl shikimate-3-phosphate and inorganic phosphate. This is 3-phosphoshikimate 1-carboxyvinyltransferase from Marinomonas sp. (strain MWYL1).